The chain runs to 440 residues: Histidinol dehydrogenase homolog 2 (440 aa).

A Zn(2+)-binding site is contributed by H265. Catalysis depends on proton acceptor residues E333 and H334. H426 lines the Zn(2+) pocket.

Belongs to the histidinol dehydrogenase family. Zn(2+) serves as cofactor.

This Mesorhizobium japonicum (strain LMG 29417 / CECT 9101 / MAFF 303099) (Mesorhizobium loti (strain MAFF 303099)) protein is Histidinol dehydrogenase homolog 2.